A 240-amino-acid polypeptide reads, in one-letter code: MAVNIIATRAAPKMASKKEHQYCLLDSQEKRHGHYPFSFELKPYGQTGANIIGVQGSLTHVIKMTVFPFMIPFPLQKTHIDDFIGGRIYLFFKELDMQAVSDVNGMQYHFEFKVVPVSPNQVELLPVNNKYKFTYAIPVVQYLTPIFYDLSGPLDFPLDTLSVHVDSLSNHIQLPIQNHNLTTGDRVFISGYKHLQTIELCKNNKIFIKYIPPLSSEKIKLYIPKNRIRIPLYFKSLKNV.

Belongs to the asfivirus H240R family.

Its subcellular location is the virion. Functionally, forms the penton at the fivefold vertices of the icosahedral capsid. Together with the minor capsid proteins (p17, p49, and M1249L), forms a complicated network immediately below the outer capsid shell, stabilizing the whole capsid. The sequence is that of Penton protein H240R from African swine fever virus (strain Badajoz 1971 Vero-adapted) (Ba71V).